Here is a 564-residue protein sequence, read N- to C-terminus: Excitatory amino acid transporter 4 (564 aa).

The Cytoplasmic portion of the chain corresponds to 1–55; it reads MSSHGNSLFLRESGQRLGRVGWLQRLQESLQQRALRTRLRLQTMTREHVLRFLRR. Ser-2 is modified (phosphoserine). Transmembrane regions (helical) follow at residues 56–76, 99–119, and 133–153; these read NAFI…AFAL, MLQM…MASL, and VYYM…VTII. Asn-216, Asn-232, and Asn-239 each carry an N-linked (GlcNAc...) asparagine glycan. Helical transmembrane passes span 262–285, 295–322, and 344–365; these read SANG…IGGV, FFDS…LFLI, and LTVI…YFLI. The segment at residues 371-401 is an intramembrane region (discontinuously helical); sequence FPFIGGVLQALITAMGTSSSSATLPITFRCL. L-aspartate is bound at residue 388–390; the sequence is SSS. The chain crosses the membrane as a helical span at residues 411-437; that stretch reads ITRFVLPVGATVNMDGTALYEALAAIF. Gly-419, Thr-421, and Asn-423 together coordinate Na(+). L-aspartate-binding positions include Thr-427, 468–472, Asp-501, and Asn-508; that span reads IPQAG. The segment at residues 451-484 is an intramembrane region (discontinuously helical); the sequence is ITTISITATAASVGAAGIPQAGLVTMVIVLTSVG. Residues 498–519 traverse the membrane as a helical segment; that stretch reads WFLDRLRTMTNVLGDSIGAAVI. The Na(+) site is built by Asn-508 and Asp-512.

The protein belongs to the dicarboxylate/amino acid:cation symporter (DAACS) (TC 2.A.23) family. SLC1A6 subfamily. In terms of assembly, homotrimer. Detected in brain, cerebellum and hippocampus.

Its subcellular location is the cell membrane. The enzyme catalyses K(+)(in) + L-glutamate(out) + 3 Na(+)(out) + H(+)(out) = K(+)(out) + L-glutamate(in) + 3 Na(+)(in) + H(+)(in). The catalysed reaction is K(+)(in) + L-aspartate(out) + 3 Na(+)(out) + H(+)(out) = K(+)(out) + L-aspartate(in) + 3 Na(+)(in) + H(+)(in). It carries out the reaction D-aspartate(out) + K(+)(in) + 3 Na(+)(out) + H(+)(out) = D-aspartate(in) + K(+)(out) + 3 Na(+)(in) + H(+)(in). Its function is as follows. Sodium-dependent, high-affinity amino acid transporter that mediates the uptake of L-glutamate and also L-aspartate and D-aspartate. Functions as a symporter that transports one amino acid molecule together with two or three Na(+) ions and one proton, in parallel with the counter-transport of one K(+) ion. Mediates Cl(-) flux that is not coupled to amino acid transport; this avoids the accumulation of negative charges due to aspartate and Na(+) symport. Plays a redundant role in the rapid removal of released glutamate from the synaptic cleft, which is essential for terminating the postsynaptic action of glutamate. This chain is Excitatory amino acid transporter 4 (SLC1A6), found in Canis lupus familiaris (Dog).